Here is a 241-residue protein sequence, read N- to C-terminus: Xyloglucan-specific endo-beta-1,4-glucanase 1 (241 aa).

A signal peptide spans 1-19 (MKGFFAGVVAAATLAVASA). Glutamate 136 is a catalytic residue. N-linked (GlcNAc...) asparagine glycans are attached at residues asparagine 174 and asparagine 190. Residue glutamate 222 is part of the active site.

It belongs to the glycosyl hydrolase 12 (cellulase H) family. In terms of assembly, interacts with host apoplastic glucanase inhibitor GIP1.

It is found in the secreted. The protein resides in the host. The catalysed reaction is xyloglucan + H2O = xyloglucan oligosaccharides.. The xyloglucanase activity is inhibited by the binding of the host apoplastic glucanase inhibitor GIP1. Glycoside hydrolase that exhibits xyloglucanase activity. Acts as an important virulence factor during P.sojae infection but also acts as a pathogen-associated molecular pattern (PAMP) in soybean and solanaceous species, where it can trigger defense responses including cell death. XEG1-induced cell death can be suppressed by P.sojae RxLR effectors. The PAMP activity is independent of its xyloglucanase activity. XEG1 induces plant defense responses in a RLP kinase Serk3/Bak1-dependent manner in Nicotiana benthamiana. Moreover, the perception of XEG1 occurs independently of the perception of ethylene-inducing xylanase Eix2 in Tomato. With truncated paralog XLP1, is required to elevate apoplastic sugar during P.sojae infection. The protein is Xyloglucan-specific endo-beta-1,4-glucanase 1 of Phytophthora sojae (strain P6497) (Soybean stem and root rot agent).